The chain runs to 74 residues: O-conotoxin GeXXXIA (74 aa).

Residues 1–22 form the signal peptide; it reads MKLTCVLIITVLFLTACQLTTA. Positions 23–33 are excised as a propeptide; sequence VTYSRGEHKHR.

It belongs to the conotoxin O1 superfamily. As to quaternary structure, homodimer; disulfide-linked. May contain 2 intrachain disulfide bonds and probably one interchain disulfide bond forming the homodimer. Post-translationally, the disulfide pairing is not important for activity towards the different nAChR subtypes, since this peptide without disulfide bond or with different disulfide bonds shows the same activity. As to expression, expressed by the venom duct.

Its subcellular location is the secreted. Functionally, the activity of this natural homodimer has not been tested due to low abundance. The synthetic linear peptide has been refolded, giving 4 different monomeric isomers (m1 to m4) with 2 disulfide bonds each. All isomers potently inhibit rat alpha-1-beta-1-delta-epsilon/CHRNA1-CHRNB1-CHRND-CHRNE and human alpha-9-alpha-10/CHRNA9-CHRNA10 nicotinic acetylcholine receptors (nAChR). In addition, they show a modest inhibition at human alpha-3-beta-2/CHRNA3-CHRNB2, alpha-3-beta-4/CHRNA3-CHRNB4, alpha-7/CHRNA7, and alpha-4-beta-4/CHRNA4-CHRNB4. The synthetic monomer peptide without disulfide bonds shows a potent activity on alpha-9-alpha-10/CHRNA9 and CHRNA10 (IC(50)=16.2 nM). This linear peptide does not act as a competitive antagonist, or as a channel pore blocker of nAChR. The chain is O-conotoxin GeXXXIA from Conus generalis (General cone).